The following is a 744-amino-acid chain: Zinc finger protein 483 (744 aa).

The region spanning 52–134 (RQRFRWFCYS…TLIEDLTQML (83 aa)) is the SCAN box domain. Residues 137–156 (KDPVSQDSTVSQEENSKEDK) are disordered. Positions 170–241 (ITLKDVAVNF…EEVSKSSRLD (72 aa)) constitute a KRAB domain. Disordered stretches follow at residues 263–308 (ESQQ…SPFG) and 350–385 (KEKTAGEKSRKSNDGGKVLSHSSALTEHQKRQKIHL). Over residues 277–293 (NQGNSKGRVAQNKTLGS) the composition is skewed to polar residues. 2 stretches are compositionally biased toward basic and acidic residues: residues 298 to 308 (KKFDPDKSPFG) and 350 to 363 (KEKTAGEKSRKSND). C2H2-type zinc fingers lie at residues 439–461 (HKCSKCGKAFGYSASLTKHRRIH), 467–489 (YMCNECGKAFSDSSSLTPHHRTH), 495–517 (FKCDDCGKGFTLSAHLIKHQRIH), 523–545 (YKCKDCGRPFSDSSSLIQHQRIH), 551–573 (YTCSNCGKSFSHSSSLSKHQRIH), 579–601 (YKCGECGKAFRQNSCLTRHQRIH), 607–629 (YLCNDCGMTFSHFTSVIYHQRLH), 635–657 (YKCNQCEKAFPTHSLLSRHQRIH), 663–685 (YKCKECGKSFSQSSSLNEHHRIH), 691–713 (YECNYCGATFSRSSILVEHLKIH), and 719–741 (YECNECEKTFKSNSGLIRHRGFH).

It belongs to the krueppel C2H2-type zinc-finger protein family.

The protein localises to the nucleus. In terms of biological role, may be involved in transcriptional regulation. The chain is Zinc finger protein 483 (ZNF483) from Homo sapiens (Human).